The following is a 41-amino-acid chain: Photosystem I reaction center subunit IX (41 aa).

The helical transmembrane segment at 7–27 threads the bilayer; the sequence is YLSTAPVLATLWFGFLAGLLI.

It belongs to the PsaJ family.

It localises to the plastid. Its subcellular location is the chloroplast thylakoid membrane. May help in the organization of the PsaE and PsaF subunits. The polypeptide is Photosystem I reaction center subunit IX (Physcomitrium patens (Spreading-leaved earth moss)).